Here is a 169-residue protein sequence, read N- to C-terminus: Disulfide bond formation protein B (169 aa).

Topologically, residues M1 to A14 are cytoplasmic. The chain crosses the membrane as a helical span at residues W15–Y31. Residues F32–V49 lie on the Periplasmic side of the membrane. Residues C41 and C44 are joined by a disulfide bond. Residues A50–P65 form a helical membrane-spanning segment. Topologically, residues K66 to W71 are cytoplasmic. A helical transmembrane segment spans residues L72 to W89. Topologically, residues Q90–Q144 are periplasmic. An intrachain disulfide couples C104 to C130. A helical membrane pass occupies residues W145 to S163. The Cytoplasmic portion of the chain corresponds to Q164–K169.

Belongs to the DsbB family.

It localises to the cell inner membrane. In terms of biological role, required for disulfide bond formation in some periplasmic proteins. Acts by oxidizing the DsbA protein. This Photorhabdus laumondii subsp. laumondii (strain DSM 15139 / CIP 105565 / TT01) (Photorhabdus luminescens subsp. laumondii) protein is Disulfide bond formation protein B.